We begin with the raw amino-acid sequence, 783 residues long: BMP/retinoic acid-inducible neural-specific protein 2 (783 aa).

Residues 1–33 (MRWPCSSRFRGLWPEAAPWAVLLALGVPGWVLA) form the signal peptide. The region spanning 85–281 (RYRIYREFAR…FVAAALSYIT (197 aa)) is the MACPF domain. N-linked (GlcNAc...) asparagine glycans are attached at residues asparagine 185, asparagine 354, asparagine 473, asparagine 579, asparagine 626, and asparagine 658.

The protein belongs to the BRINP family. As to expression, expressed in olfactory bulb, cerebellum and neuronal layers in hippocampus.

It localises to the secreted. Inhibits neuronal cell proliferation by negative regulation of the cell cycle transition. The sequence is that of BMP/retinoic acid-inducible neural-specific protein 2 (Brinp2) from Rattus norvegicus (Rat).